The sequence spans 500 residues: MKTTLSHALGNNFLGASPLWYKQVVIAFLIINPIAVVTLGPFVTGWLFIIEFIFTLAMALKCYPLQPGGLIAIQAVLLGLTSSDGVYHEVNKNFDVILLLMFMVAGIYFMKDMLLFIFNKLLVRVKSKIVISLIFSFSAALLSAFLDALTVTAVLISVGVGFYSVYHKAASGQSSNKNHDHAKDDSILPINTEDLNEFRSFLRDLLMHGAVGTALGGVSTLVGEPQNLLIAKVAGWDFIDFFLYVAPVSMPVLACGLLTVVILEKTAWFDYGAQLPDTVRDILNNFEKEESQKQTNKHKAKLIIQGIVAIILILSLAFHIAEVGLVGLMVIVLLTAFNGITDEHQIGHAFEEALPFTALLVVFFTIVSVIHEQHLFQPIIDIVLHMPTDSQPIMFFIANGILSAISDNVFVATVYISEVKAALDAGTITREHFNTLAVAINTGTNLPSVATPNGQAAFLFLLTSAIAPLLRLSYGKMVWMALPYTVVLSVVGGLCVTYFL.

11 helical membrane-spanning segments follow: residues 13–33 (FLGASPLWYKQVVIAFLIINP), 34–54 (IAVVTLGPFVTGWLFIIEFIF), 62–82 (CYPLQPGGLIAIQAVLLGLTS), 97–117 (ILLLMFMVAGIYFMKDMLLFI), 129–149 (IVISLIFSFSAALLSAFLDAL), 242–262 (FLYVAPVSMPVLACGLLTVVI), 306–326 (GIVAIILILSLAFHIAEVGLV), 350–370 (FEEALPFTALLVVFFTIVSVI), 392–412 (PIMFFIANGILSAISDNVFVA), 449–469 (VATPNGQAAFLFLLTSAIAPL), and 477–497 (MVWMALPYTVVLSVVGGLCVT).

The protein belongs to the NhaB Na(+)/H(+) (TC 2.A.34) antiporter family.

Its subcellular location is the cell inner membrane. It carries out the reaction 2 Na(+)(in) + 3 H(+)(out) = 2 Na(+)(out) + 3 H(+)(in). In terms of biological role, na(+)/H(+) antiporter that extrudes sodium in exchange for external protons. The sequence is that of Na(+)/H(+) antiporter NhaB from Marinomonas sp. (strain MWYL1).